Here is a 386-residue protein sequence, read N- to C-terminus: Phosphatidyl-myo-inositol mannosyltransferase (386 aa).

Residues Y9 and G16 each coordinate GDP-alpha-D-mannose. Residues Q18, 62–63 (YN), and R68 each bind a 1,2-diacyl-sn-glycero-3-phospho-(1D-myo-inositol). Residues R196, 201–202 (RK), 251–253 (VDD), K256, 274–278 (ESFGI), and E282 each bind GDP-alpha-D-mannose.

It belongs to the glycosyltransferase group 1 family. Glycosyltransferase 4 subfamily. In terms of assembly, monomer. The cofactor is Mg(2+).

It is found in the cell membrane. It catalyses the reaction a 1,2-diacyl-sn-glycero-3-phospho-(1D-myo-inositol) + GDP-alpha-D-mannose = a 1,2-diacyl-sn-glycero-3-phospho-[alpha-D-mannopyranosyl-(1&lt;-&gt;6)-D-myo-inositol] + GDP + H(+). It participates in phospholipid metabolism; phosphatidylinositol metabolism. In terms of biological role, involved in the biosynthesis of phosphatidyl-myo-inositol mannosides (PIM) which are early precursors in the biosynthesis of lipomannans (LM) and lipoarabinomannans (LAM). Catalyzes the addition of a mannosyl residue from GDP-D-mannose (GDP-Man) to the position 2 of the carrier lipid phosphatidyl-myo-inositol (PI) to generate a phosphatidyl-myo-inositol bearing an alpha-1,2-linked mannose residue (PIM1). In contrary to PimB, the mannosyltransferase PimA is unable to transfer a mannose residue to the position 6 of the phosphatidyl-myo-inositol of PIM1. The sequence is that of Phosphatidyl-myo-inositol mannosyltransferase from Mycolicibacterium smegmatis (strain ATCC 700084 / mc(2)155) (Mycobacterium smegmatis).